The sequence spans 333 residues: Cytosolic sulfotransferase 10 (333 aa).

3'-phosphoadenylyl sulfate is bound at residue 76-81 (KSGTTW). Histidine 146 (proton acceptor) is an active-site residue. 3'-phosphoadenylyl sulfate-binding positions include arginine 168, serine 176, tyrosine 234, and 299-301 (RKG).

The protein belongs to the sulfotransferase 1 family. As to expression, expressed in roots.

The protein localises to the cytoplasm. In terms of biological role, sulfotransferase that utilizes 3'-phospho-5'-adenylyl sulfate (PAPS) as sulfonate donor to specifically catalyze the sulfate conjugation of brassinosteroids, including castasterone (CS), brassinolide (BL), related 24-epimers, and the naturally occurring (22R, 23R)-28-homobrassinosteroids. No activity on phenolic acids, desulfo-glucosinolates, flavonoids, steroids, gibberellic acids, cytokinins, phenylpropanoids, hydroxyjasmonates and coumarins. This Arabidopsis thaliana (Mouse-ear cress) protein is Cytosolic sulfotransferase 10 (SOT10).